A 344-amino-acid polypeptide reads, in one-letter code: uncharacterized protein (344 aa).

The first 19 residues, 1–19 (MRIIFYLTLLLFIFNKVKS), serve as a signal peptide directing secretion. Residues 323–344 (SATRNQISIMVLILSVLLVLIL) constitute a propeptide, removed in mature form.

It is found in the cell membrane. This is an uncharacterized protein from Dictyostelium discoideum (Social amoeba).